A 101-amino-acid polypeptide reads, in one-letter code: Small ribosomal subunit protein bS18c (101 aa).

Basic residues predominate over residues 1–19; sequence MDKSKRPFRKSKRSFRRRL. Disordered regions lie at residues 1–23 and 82–101; these read MDKS…PPIG and KQFE…TRNK.

It belongs to the bacterial ribosomal protein bS18 family. Part of the 30S ribosomal subunit.

It localises to the plastid. The protein resides in the chloroplast. The sequence is that of Small ribosomal subunit protein bS18c from Drimys granadensis.